A 502-amino-acid polypeptide reads, in one-letter code: UDP-N-acetylmuramoylalanine--D-glutamate ligase (502 aa).

An ATP-binding site is contributed by 129-135 (GTNGKTT). Residues 288 to 307 (APDETTSRRRKRDGAHTPDI) form a disordered region.

Belongs to the MurCDEF family.

The protein resides in the cytoplasm. The enzyme catalyses UDP-N-acetyl-alpha-D-muramoyl-L-alanine + D-glutamate + ATP = UDP-N-acetyl-alpha-D-muramoyl-L-alanyl-D-glutamate + ADP + phosphate + H(+). Its pathway is cell wall biogenesis; peptidoglycan biosynthesis. In terms of biological role, cell wall formation. Catalyzes the addition of glutamate to the nucleotide precursor UDP-N-acetylmuramoyl-L-alanine (UMA). The polypeptide is UDP-N-acetylmuramoylalanine--D-glutamate ligase (Burkholderia ambifaria (strain ATCC BAA-244 / DSM 16087 / CCUG 44356 / LMG 19182 / AMMD) (Burkholderia cepacia (strain AMMD))).